The sequence spans 461 residues: Homocitrate synthase (461 aa).

One can recognise a Pyruvate carboxyltransferase domain in the interval 4-259; sequence VGILDSTLRE…IEVVKLDKLQ (256 aa). Arginine 12 provides a ligand contact to 2-oxoglutarate. Glutamate 13 contributes to the Mg(2+) binding site. Residues histidine 76, arginine 136, and threonine 170 each coordinate 2-oxoglutarate. Histidine 198 and histidine 200 together coordinate Mg(2+). Histidine 292 acts as the Proton acceptor in catalysis.

Belongs to the alpha-IPM synthase/homocitrate synthase family. Homocitrate synthase LYS20/LYS21 subfamily. The cofactor is Mg(2+). Mn(2+) is required as a cofactor.

The enzyme catalyses acetyl-CoA + 2-oxoglutarate + H2O = (2R)-homocitrate + CoA + H(+). It functions in the pathway amino-acid biosynthesis; L-lysine biosynthesis via AAA pathway; L-alpha-aminoadipate from 2-oxoglutarate: step 1/5. Functionally, catalyzes the aldol-type condensation of 2-oxoglutarate with acetyl-CoA to yield homocitrate. Carries out the first step of the alpha-aminoadipate (AAA) lysine biosynthesis pathway. This chain is Homocitrate synthase, found in Saccharolobus islandicus (strain Y.N.15.51 / Yellowstone #2) (Sulfolobus islandicus).